Consider the following 779-residue polypeptide: Nucleolar complex protein 3 homolog (779 aa).

Disordered regions lie at residues 1 to 20 (MGFA…TNKT) and 100 to 189 (NAKR…SHLS). Residues 114–124 (DSDEDEDEDDV) are compositionally biased toward acidic residues. The segment covering 136–160 (EEGHEELLPIKLKDGTLIRPTREKE) has biased composition (basic and acidic residues). Residues 161 to 178 (VEEQEEEEKSDIDEGEED) are compositionally biased toward acidic residues. Positions 434–474 (AKKYQIKKERASKTAKKYKKQLARLEADLLEVEAEESLTKK) form a coiled coil.

The protein belongs to the CBF/MAK21 family.

It is found in the nucleus. It localises to the nucleolus. The polypeptide is Nucleolar complex protein 3 homolog (Caenorhabditis briggsae).